Consider the following 313-residue polypeptide: Ribosomal RNA small subunit methyltransferase H (313 aa).

S-adenosyl-L-methionine-binding positions include 35–37, D55, F79, D101, and Q108; that span reads GGH.

It belongs to the methyltransferase superfamily. RsmH family.

It localises to the cytoplasm. It catalyses the reaction cytidine(1402) in 16S rRNA + S-adenosyl-L-methionine = N(4)-methylcytidine(1402) in 16S rRNA + S-adenosyl-L-homocysteine + H(+). In terms of biological role, specifically methylates the N4 position of cytidine in position 1402 (C1402) of 16S rRNA. This Escherichia coli O127:H6 (strain E2348/69 / EPEC) protein is Ribosomal RNA small subunit methyltransferase H.